The primary structure comprises 638 residues: 3D-(3,5/4)-trihydroxycyclohexane-1,2-dione hydrolase (638 aa).

Glu67 provides a ligand contact to thiamine diphosphate. The interval 442 to 523 is thiamine pyrophosphate binding; sequence SLPGDLQRLW…INIMLFDNSG (82 aa). Positions 494 and 521 each coordinate Mg(2+).

This sequence belongs to the TPP enzyme family. The cofactor is Mg(2+). Thiamine diphosphate is required as a cofactor.

The catalysed reaction is 3D-3,5/4-trihydroxycyclohexane-1,2-dione + H2O = 5-deoxy-D-glucuronate + H(+). The protein operates within polyol metabolism; myo-inositol degradation into acetyl-CoA; acetyl-CoA from myo-inositol: step 3/7. Its function is as follows. Involved in the cleavage of the C1-C2 bond of 3D-(3,5/4)-trihydroxycyclohexane-1,2-dione (THcHDO) to yield 5-deoxy-glucuronate (5DG). This Listeria innocua serovar 6a (strain ATCC BAA-680 / CLIP 11262) protein is 3D-(3,5/4)-trihydroxycyclohexane-1,2-dione hydrolase.